The primary structure comprises 478 residues: UDP-N-acetylmuramate--L-alanine ligase (478 aa).

126–132 (GTHGKTT) serves as a coordination point for ATP.

This sequence belongs to the MurCDEF family.

The protein resides in the cytoplasm. The catalysed reaction is UDP-N-acetyl-alpha-D-muramate + L-alanine + ATP = UDP-N-acetyl-alpha-D-muramoyl-L-alanine + ADP + phosphate + H(+). It functions in the pathway cell wall biogenesis; peptidoglycan biosynthesis. In terms of biological role, cell wall formation. The polypeptide is UDP-N-acetylmuramate--L-alanine ligase (Mycolicibacterium vanbaalenii (strain DSM 7251 / JCM 13017 / BCRC 16820 / KCTC 9966 / NRRL B-24157 / PYR-1) (Mycobacterium vanbaalenii)).